The following is a 221-amino-acid chain: Zingipain-2 (221 aa).

2 cysteine pairs are disulfide-bonded: C24–C65 and C58–C98. C27 is a catalytic residue. 2 N-linked (GlcNAc...) asparagine glycosylation sites follow: N99 and N156. The cysteines at positions 155 and 206 are disulfide-linked. Residue H161 is part of the active site.

This sequence belongs to the peptidase C1 family.

It catalyses the reaction Preferential cleavage of peptides with a proline residue at the P2 position.. Cysteine proteinase with a specific activity toward peptides with a proline residue at the P2 position. The protein is Zingipain-2 of Zingiber officinale (Ginger).